A 436-amino-acid polypeptide reads, in one-letter code: tRNA-2-methylthio-N(6)-dimethylallyladenosine synthase (436 aa).

The MTTase N-terminal domain maps to 1–115; that stretch reads MRVFFKTYGC…IAEVLQKAAR (115 aa). The [4Fe-4S] cluster site is built by Cys10, Cys46, Cys80, Cys151, Cys155, and Cys158. The Radical SAM core domain occupies 137–368; it reads RFSKHHAWIT…LELQKQINRE (232 aa). Residues 371–432 enclose the TRAM domain; the sequence is MQYLGKVVEI…AGPLYGKLQK (62 aa).

The protein belongs to the methylthiotransferase family. MiaB subfamily. In terms of assembly, monomer. [4Fe-4S] cluster is required as a cofactor.

The protein resides in the cytoplasm. It carries out the reaction N(6)-dimethylallyladenosine(37) in tRNA + (sulfur carrier)-SH + AH2 + 2 S-adenosyl-L-methionine = 2-methylsulfanyl-N(6)-dimethylallyladenosine(37) in tRNA + (sulfur carrier)-H + 5'-deoxyadenosine + L-methionine + A + S-adenosyl-L-homocysteine + 2 H(+). In terms of biological role, catalyzes the methylthiolation of N6-(dimethylallyl)adenosine (i(6)A), leading to the formation of 2-methylthio-N6-(dimethylallyl)adenosine (ms(2)i(6)A) at position 37 in tRNAs that read codons beginning with uridine. The chain is tRNA-2-methylthio-N(6)-dimethylallyladenosine synthase from Pseudothermotoga lettingae (strain ATCC BAA-301 / DSM 14385 / NBRC 107922 / TMO) (Thermotoga lettingae).